The sequence spans 1949 residues: MGNSYAGQLKTTRFEEVLHNSIEASLRSNNLVPRPIFSQLYLEAEQQLAALEGGSRVDNEEEEEEGEGGLETNGPPNPFQLHPLPEGCCTTDGFCQAGKDLRLVSISNEPMDVPAGFLLVGVKSPSLPDHLLVCAVDKRFLPDDNGHNALLGFSGNCVGCGKKGFCYFTEFSNHINLKLTTQPKKQKHLKYYLVRNAQGTLTKGPLICWKGSEFRSRQIPASTCSSSLFPALESTAAFPSEPVPGTNPSILMGAQQAGPASDHPSLNAAMGPAVFNGKDSPKCQQLAKNNLLALPRPSALGILSNSGPPKKRHKGWSPESPSAPDGGCPQGGGNRAKYESAGMSCVPQVGLVGPASVTFPVVASGEPVSVPDNLLKICKAKPVIFKGHGNFPYLCGNLNDVVVSPLLYTCYQNSQSVSRAYEQYGASAIQPISEEMQLLLTVYYLVQLAADQVPLMEDLEQIFLRSWRESHLTEIRQYQQAPPQPFPPAPSAAAPVTSAQLPWLASLAASSCNDSVHVIECAYSLAEGLSEMFRLLVEGKLAKTNYVVIICACRSAAIDSCIAVTGKYQARILSESLLTPAEYQKEVNYELVTGKVDSLGAFFSTLCPEGDIDILLDKFHQENQGHISSSLAASSVTKAASLDVSGTPVCTSYNLEPHSIRPFQLAVAQKLLSHVCSIADSSTQNLDLGSFEKVDFLICIPPSEVTYQQTLLHVWHSGVLLELGLKKEHMTKQRVEQYVLKLDTEAQTKFKAFLQNSFQNPHTLFVLIHDHAHWDLVSSTVHNLYSQSDPSVGLVDRLLNCREVKEAPNIVTLHVTSFPYALQTQHTLISPYNEIHWPASCSNGVDLYHENKKYFGLSEFIESTLSGHSLPLLRYDSSFEAMVTALGKRFPRLHSAVIRTFVLVQHYAAALMAVSGLPQMKNYTSVETLEITQNLLNSPKQCPCGHGLMVLLRVPCSPLAVVAYERLAHVRARLALEEHFEIILGSPSSGVTVGKHFVKQLRMWQKIEDVEWRPQTYLELEGLPCILIFSGMDPHGESLPRSLRYCDLRLINSSCLVRTALEQELGLAAYFVSNEVPLEKGARNEALESDAEKLSSTDNEDEELGTEGSTSEKRSPMKRERSRSHDSASSSLSSKASGSALGGESSAQPTALPQGEHARSPQPRGPAEEGRAPGEKQRPRASQGPPSAISRHSPGPTPQPDCSLRTGQRSVQVSVTSSCSQLSSSSGSSSSSVAPAAGTWVLQASQCSLTKACRQPPIVFLPKLVYDMVVSTDSSGLPKAASLLPSPSVMWASSFRPLLSKTMTSTEQSLYYRQWTVPRPSHMDYGNRAEGRVDGFHPRRLLLSGPPQIGKTGAYLQFLSVLSRMLVRLTEVDVYDEEEININLREESDWHYLQLSDPWPDLELFKKLPFDYIIHDPKYEDASLICSHYQGIKSEDRGMSRKPEDLYVRRQTARMRLSKYAAYNTYHHCEQCHQYMGFHPRYQLYESTLHAFAFSYSMLGEEIQLHFIIPKSKEHHFVFSQPGGQLESMRLPLVTDKSHEYIKSPTFTPTTGRHEHGLFNLYHAMDGASHLHVLVVKEYEMAIYKKYWPNHIMLVLPSIFNSAGVGAAHFLIKELSYHNLELERNRQEELGIKPQDIWPFIVISDDSCVMWNVVDVNSAGERSREFSWSERNVSLKHIMQHIEAAPDIMHYALLGLRKWSSKTRASEVQEPFSRCHVHNFIILNVDLTQNVQYNQNRFLCDDVDFNLRVHSAGLLLCRFNRFSVMKKQIVVGGHRSFHITSKVSDNSAAVVPAQYICAPDSKHTFLAAPAQLLLEKFLQHHSHLFFPLSLKNHDHPVLSVDCYLNLGSQISVCYVSSRPHSLNISCSDLLFSGLLLYLCDSFVGASFLKKFHFLKGATLCVICQDRSSLRQTVVRLELEDEWQFRLRDEFQTANAREDRPLFFLTGRHI.

Disordered regions lie at residues 52–77 (EGGS…GPPN), 302–334 (ILSN…GGGN), and 1085–1210 (EALE…GQRS). Residues 59 to 68 (NEEEEEEGEG) are compositionally biased toward acidic residues. Basic and acidic residues-rich tracts occupy residues 1085-1095 (EALESDAEKLS) and 1110-1126 (TSEK…RSHD). Positions 1127-1147 (SASSSLSSKASGSALGGESSA) are enriched in low complexity. Residues 1166-1178 (PAEEGRAPGEKQR) show a composition bias toward basic and acidic residues. The helical transmembrane segment at 1868–1888 (DLLFSGLLLYLCDSFVGASFL) threads the bilayer.

It belongs to the GREB1 family. In terms of tissue distribution, expressed in proliferating prostatic tissue and prostate cancer.

It is found in the membrane. Functionally, may play a role in estrogen-stimulated cell proliferation. Acts as a regulator of hormone-dependent cancer growth in breast and prostate cancers. This chain is Protein GREB1 (GREB1), found in Homo sapiens (Human).